The primary structure comprises 415 residues: ER-derived vesicles protein ERV46 (415 aa).

Residues 1–24 (MKRSTLLSLDAFAKTEEDVRVRTR) are Cytoplasmic-facing. A helical membrane pass occupies residues 25–45 (AGGLITLSCILTTLFLLVNEW). The Lumenal segment spans residues 46-376 (GQFNSVVTRP…VINKEQHGQT (331 aa)). A helical membrane pass occupies residues 377-397 (WSGFILNCITSIGGVLAVGTV). Over 398–415 (MDKLFYKAQRSIWGKKSQ) the chain is Cytoplasmic. A Phenylalanine-tyrosine motif motif is present at residues 402–403 (FY).

The protein belongs to the ERGIC family. Interacts with ERV41.

Its subcellular location is the endoplasmic reticulum membrane. The protein resides in the golgi apparatus membrane. Its function is as follows. Constituent of COPII-coated endoplasmic reticulum-derived transport vesicles. Required for efficient transport of a subset of secretory proteins to the Golgi. The C-terminal Phe-Tyr motif is required for exit from the endoplasmic reticulum. Facilitates retrograde transport from the Golgi to the endoplasmic reticulum. The sequence is that of ER-derived vesicles protein ERV46 (ERV46) from Saccharomyces cerevisiae (strain ATCC 204508 / S288c) (Baker's yeast).